Here is a 968-residue protein sequence, read N- to C-terminus: RNA polymerase-associated protein RapA (968 aa).

One can recognise a Helicase ATP-binding domain in the interval 164 to 334 (EVGQRHAPRV…FARLRLLDPD (171 aa)). 177–184 (DEVGLGKT) is a binding site for ATP. Positions 280–283 (DEAH) match the DEAH box motif. One can recognise a Helicase C-terminal domain in the interval 490-644 (RVEWLLNYLV…TCPTGRTIYD (155 aa)).

It belongs to the SNF2/RAD54 helicase family. RapA subfamily. In terms of assembly, interacts with the RNAP. Has a higher affinity for the core RNAP than for the holoenzyme. Its ATPase activity is stimulated by binding to RNAP.

In terms of biological role, transcription regulator that activates transcription by stimulating RNA polymerase (RNAP) recycling in case of stress conditions such as supercoiled DNA or high salt concentrations. Probably acts by releasing the RNAP, when it is trapped or immobilized on tightly supercoiled DNA. Does not activate transcription on linear DNA. Probably not involved in DNA repair. The chain is RNA polymerase-associated protein RapA from Yersinia pestis bv. Antiqua (strain Antiqua).